The chain runs to 413 residues: MIEELGLKVKKASKEVAKLSTADKNVFLQNLADSLIENTDRIISENEKDLANALEHGISEIMDDRLRLNAQRISDMATGLRQVAELPDPIRQVLQGFTNLDGLKILQKRVPLGTVGMIFESRPNVTIDAFSLCFKTGNSVLLRGGSDAIYSNMVLVEIIKENLLSAKITDGAVELLSDTSHAEAEKMMQADKFLDVLIPRGSARLINRVKEKATVPVIETGVGNCTIFVDESADLEMATKIVINAKTQRPSVCNAAESLVVHAKIADEFLPKLENEINKVHEIEFRADERALKVLSAGIPATDDDFGTEFLDYILSVKTVDNLDEAIEHINTYSSRHSESIVTHDYFNAQKFQDEIDAAAVYVNASTRFTDGFVFGLGAEIGISTQKLHARGPMGLEALTSTKYLIDGTGQIR.

Belongs to the gamma-glutamyl phosphate reductase family.

The protein resides in the cytoplasm. It catalyses the reaction L-glutamate 5-semialdehyde + phosphate + NADP(+) = L-glutamyl 5-phosphate + NADPH + H(+). Its pathway is amino-acid biosynthesis; L-proline biosynthesis; L-glutamate 5-semialdehyde from L-glutamate: step 2/2. Its function is as follows. Catalyzes the NADPH-dependent reduction of L-glutamate 5-phosphate into L-glutamate 5-semialdehyde and phosphate. The product spontaneously undergoes cyclization to form 1-pyrroline-5-carboxylate. The polypeptide is Gamma-glutamyl phosphate reductase (Lactococcus lactis subsp. lactis (strain IL1403) (Streptococcus lactis)).